A 210-amino-acid chain; its full sequence is Probable GTP-binding protein EngB (210 aa).

The region spanning 25–199 (TGIEVAFAGR…RQKLDSWFNE (175 aa)) is the EngB-type G domain. GTP is bound by residues 33-40 (GRSNAGKS), 60-64 (GRTQL), 78-81 (DLPG), 145-148 (TKAD), and 178-180 (FSS). Mg(2+) contacts are provided by Ser40 and Thr62.

It belongs to the TRAFAC class TrmE-Era-EngA-EngB-Septin-like GTPase superfamily. EngB GTPase family. Requires Mg(2+) as cofactor.

Functionally, necessary for normal cell division and for the maintenance of normal septation. The sequence is that of Probable GTP-binding protein EngB from Klebsiella pneumoniae subsp. pneumoniae (strain ATCC 700721 / MGH 78578).